Reading from the N-terminus, the 189-residue chain is Calcyphosin (189 aa).

4 consecutive EF-hand domains span residues 21-56 (LGIQGLARFFRRLDRDRSRSLDSRELQRGLAELGLV), 57-92 (LDTAEAEGVCRRWDRDGSGTLDLEEFLRALRPPMSQ), 93-128 (AREAVIAAAFAKLDRSGDGVVTVDDLRGVYSGRTHP), and 136-172 (TEEEVLRRFLDNFDSSEKDGQVTLAEFQDYYSGVSAS). Ca(2+)-binding residues include D34, D36, S38, S40, E45, D70, D72, S74, T76, E81, D106, S108, D110, and D117. S40 carries the phosphoserine; by PKA modification.

As to quaternary structure, monomer. Does not form oligomers in the presence of calcium. Post-translationally, phosphorylated in response to thyrotropin and cAMP. As to expression, detected in thyroid, salivary gland, lung, brain and cerebellum (at protein level).

The protein resides in the cytoplasm. Functionally, calcium-binding protein. May play a role in cellular signaling events (Potential). The sequence is that of Calcyphosin (CAPS) from Canis lupus familiaris (Dog).